The following is a 174-amino-acid chain: Guided entry of tail-anchored proteins factor 1 (174 aa).

Residues 1 to 8 (MSASETDR) are Lumenal-facing. A helical transmembrane segment spans residues 9–29 (WAWLLVLSFVFGCNLLRILLP). Residues 30–99 (SLSSFISRVL…VKARTAQLAK (70 aa)) lie on the Cytoplasmic side of the membrane. Residues 39–94 (LQKDAEQESQMRAEIQGMKQELSTVNMMDEFARYARLERKINKMTDKLKTHVKART) are a coiled coil. The interaction with GET3/TRC40 stretch occupies residues 39–97 (LQKDAEQESQMRAEIQGMKQELSTVNMMDEFARYARLERKINKMTDKLKTHVKARTAQL). A helical membrane pass occupies residues 100 to 120 (IKWFISVAFYILQAALMISLI). The Lumenal portion of the chain corresponds to 121–148 (WKYYSVPVAVVPSKWITPLDRLVAFPTR). A helical transmembrane segment spans residues 149 to 169 (VAGGIGITCWILVCNKVVAIV). At 170–174 (LHPFS) the chain is on the cytoplasmic side.

The protein belongs to the WRB/GET1 family. As to quaternary structure, component of the Golgi to ER traffic (GET) complex, which is composed of GET1, CAMLG/GET2 and GET3. Within the complex, GET1 and CAMLG form a heterotetramer which is stabilized by phosphatidylinositol binding and which binds to the GET3 homodimer. Interacts with CAMLG/GET2 (via C-terminus). GET3 shows a higher affinity for CAMLG than for GET1.

Its subcellular location is the endoplasmic reticulum membrane. Its function is as follows. Required for the post-translational delivery of tail-anchored (TA) proteins to the endoplasmic reticulum. Together with CAMLG/GET2, acts as a membrane receptor for soluble GET3/TRC40, which recognizes and selectively binds the transmembrane domain of TA proteins in the cytosol. Required to ensure correct topology and ER insertion of CAMLG. The chain is Guided entry of tail-anchored proteins factor 1 from Mus musculus (Mouse).